The following is a 583-amino-acid chain: 2-succinyl-5-enolpyruvyl-6-hydroxy-3-cyclohexene-1-carboxylate synthase (583 aa).

This sequence belongs to the TPP enzyme family. MenD subfamily. As to quaternary structure, homodimer. Mg(2+) is required as a cofactor. Requires Mn(2+) as cofactor. The cofactor is thiamine diphosphate.

The enzyme catalyses isochorismate + 2-oxoglutarate + H(+) = 5-enolpyruvoyl-6-hydroxy-2-succinyl-cyclohex-3-ene-1-carboxylate + CO2. The protein operates within quinol/quinone metabolism; 1,4-dihydroxy-2-naphthoate biosynthesis; 1,4-dihydroxy-2-naphthoate from chorismate: step 2/7. It participates in quinol/quinone metabolism; menaquinone biosynthesis. Its function is as follows. Catalyzes the thiamine diphosphate-dependent decarboxylation of 2-oxoglutarate and the subsequent addition of the resulting succinic semialdehyde-thiamine pyrophosphate anion to isochorismate to yield 2-succinyl-5-enolpyruvyl-6-hydroxy-3-cyclohexene-1-carboxylate (SEPHCHC). The protein is 2-succinyl-5-enolpyruvyl-6-hydroxy-3-cyclohexene-1-carboxylate synthase of Chlorobium luteolum (strain DSM 273 / BCRC 81028 / 2530) (Pelodictyon luteolum).